The primary structure comprises 824 residues: C-Jun-amino-terminal kinase-interacting protein 2 (824 aa).

Disordered regions lie at residues 1–28, 40–160, 172–349, and 361–501; these read MADR…QDIS, ITDD…GFDL, CSPA…DSPW, and EGSS…APRD. A compositionally biased stretch (acidic residues) spans 77-110; the sequence is DFQEFEMIDDNEEEDDEDEEEEEEEEEGDGEGQE. Residues 110 to 275 are JNK-binding domain (JBD); the sequence is EGGDPGSEAP…RMISSISETE (166 aa). Residues 141–156 show a composition bias toward polar residues; that stretch reads LRLTTLGAQDSLNNNG. A necessary for interaction with FGF13 region spans residues 239-498; that stretch reads GRGGRRSSQE…PGGRGTGPSA (260 aa). Phosphoserine is present on residues S254, S302, and S305. Positions 268–305 are enriched in low complexity; it reads ISSISETELELSSDGGSSSSGRSSHLTNSIEEASSPAS. The segment covering 327–346 has biased composition (acidic residues); that stretch reads TNSEYESGSESEPDLSEDAD. The segment covering 416–432 has biased composition (pro residues); sequence APPPPAPAAPRPGPAQP. The segment covering 451–467 has biased composition (low complexity); it reads AAPGRAARPGRACSAAC. A compositionally biased stretch (acidic residues) spans 468 to 484; that stretch reads SEEEDEEDDEEEEDAED. One can recognise an SH3 domain in the interval 604 to 665; that stretch reads EREQTHRAVF…PAFYAHAVPG (62 aa). The PID domain maps to 677-813; the sequence is PCWVERFDVQ…FLEYYQEHLA (137 aa).

Belongs to the JIP scaffold family. In terms of assembly, forms homo- or heterooligomeric complexes. Binds specific components of the JNK signaling pathway namely JNK1, JNK2, JNK3, MAP2K7, MAP3K10, MAP3K11, MAP3K12 and MAPK13. Also binds the proline-rich domain-containing splice variant of apolipoprotein E receptor 2 (ApoER2). Binds the cytoplasmic tails of LRP1 and LRP2 (Megalin). Binds the TPR motif-containing C-terminal of kinesin light chain, Klc1, pre-assembled MAPK8IP1 scaffolding complexes are then transported as a cargo of kinesin, to the required subcellular location. Interacts with the cytoplasmic domain of APP. Interacts with DCLK2. Interacts with TIAM1 and TIAM2. Interacts with FGF13; enables the interaction with MAPK13 and may regulate the MAPK8IP2 scaffolding activity. Interacts with SH3RF2. Expressed mainly in the brain and pancreas, including insulin-secreting cells. In the nervous system, more abundantly expressed in the cerebellum, pituitary gland, occipital lobe and the amygdala. Also expressed in fetal brain. Very low levels found in uterus, ovary, prostate, colon, testis, adrenal gland, thyroid gland and salivary gland.

It localises to the cytoplasm. In terms of biological role, the JNK-interacting protein (JIP) group of scaffold proteins selectively mediates JNK signaling by aggregating specific components of the MAPK cascade to form a functional JNK signaling module. JIP2 inhibits IL1 beta-induced apoptosis in insulin-secreting cells. May function as a regulator of vesicle transport, through interactions with the JNK-signaling components and motor proteins. The sequence is that of C-Jun-amino-terminal kinase-interacting protein 2 (MAPK8IP2) from Homo sapiens (Human).